A 45-amino-acid polypeptide reads, in one-letter code: Conotoxin reg3.12 (45 aa).

A propeptide spanning residues 1 to 31 (DQPVERHAGNKRHLNPTIRRAMIIDANRREK) is cleaved from the precursor. 3 disulfides stabilise this stretch: cysteine 32-cysteine 44, cysteine 33-cysteine 42, and cysteine 38-cysteine 45.

Belongs to the conotoxin M superfamily. Expressed by the venom duct.

It localises to the secreted. This is Conotoxin reg3.12 from Conus regius (Crown cone).